A 347-amino-acid chain; its full sequence is HTH-type transcriptional regulator PhcA (347 aa).

The 61-residue stretch at 1 to 61 folds into the HTH lysR-type domain; the sequence is MVNVDTKLLV…IRVPHGLTPT (61 aa). Positions 21-40 form a DNA-binding region, H-T-H motif; sequence ATYVAEKMHMTAPAVSHSLG. The tract at residues 316–347 is disordered; sequence PMHPPMLTDDSGKSGKTGKGDAEKEDESRLSV. A compositionally biased stretch (basic and acidic residues) spans 325-347; sequence DSGKSGKTGKGDAEKEDESRLSV.

It belongs to the LysR transcriptional regulatory family.

Regulates the transcription of one or more of the genes involved in virulence. The polypeptide is HTH-type transcriptional regulator PhcA (phcA) (Ralstonia nicotianae (strain ATCC BAA-1114 / GMI1000) (Ralstonia solanacearum)).